The sequence spans 247 residues: Cell division protein ZapD (247 aa).

The protein belongs to the ZapD family. Interacts with FtsZ.

The protein localises to the cytoplasm. Cell division factor that enhances FtsZ-ring assembly. Directly interacts with FtsZ and promotes bundling of FtsZ protofilaments, with a reduction in FtsZ GTPase activity. The sequence is that of Cell division protein ZapD from Escherichia coli O157:H7.